We begin with the raw amino-acid sequence, 458 residues long: Fumarate hydratase class II 2 (458 aa).

Substrate contacts are provided by residues 98–100, 123–126, 133–135, and T181; these read SGT, NPND, and SSN. H182 acts as the Proton donor/acceptor in catalysis. Residue S312 is part of the active site. Substrate is bound by residues S313 and 318-320; that span reads KVN.

Belongs to the class-II fumarase/aspartase family. Fumarase subfamily. Homotetramer.

It is found in the cytoplasm. It catalyses the reaction (S)-malate = fumarate + H2O. Its pathway is carbohydrate metabolism; tricarboxylic acid cycle; (S)-malate from fumarate: step 1/1. Its function is as follows. Involved in the TCA cycle. Catalyzes the stereospecific interconversion of fumarate to L-malate. In Pseudomonas aeruginosa (strain ATCC 15692 / DSM 22644 / CIP 104116 / JCM 14847 / LMG 12228 / 1C / PRS 101 / PAO1), this protein is Fumarate hydratase class II 2.